A 391-amino-acid chain; its full sequence is Yellow-related salivary protein ASP4 (391 aa).

Positions 1–18 (MKIFLCIIAVVSLQGVVA) are cleaved as a signal peptide. Asn-29 carries N-linked (GlcNAc...) asparagine glycosylation.

Belongs to the major royal jelly protein family. Female salivary gland (at protein level).

The protein localises to the secreted. Its function is as follows. Probably modulates blood feeding of sand flies on vertebrate species by binding and sequestering different mediators involved in the host response. Binds biogenic amines. Binds serotonin and dopamine with high affinity. Binds adrenaline, octopamine and adrenaline with medium affinity. Binds histamine with low affinity. In Phlebotomus orientalis (Phlebotomine sand fly), this protein is Yellow-related salivary protein ASP4.